The sequence spans 92 residues: Small ribosomal subunit protein uS19c (92 aa).

The protein belongs to the universal ribosomal protein uS19 family.

The protein localises to the plastid. It is found in the chloroplast. Its function is as follows. Protein S19 forms a complex with S13 that binds strongly to the 16S ribosomal RNA. The protein is Small ribosomal subunit protein uS19c (rps19) of Pinus thunbergii (Japanese black pine).